The primary structure comprises 141 residues: Nucleoside diphosphate kinase (141 aa).

The ATP site is built by lysine 11, phenylalanine 59, arginine 87, threonine 93, arginine 104, and asparagine 114. Histidine 117 functions as the Pros-phosphohistidine intermediate in the catalytic mechanism.

Belongs to the NDK family. In terms of assembly, homotetramer. The cofactor is Mg(2+).

The protein resides in the cytoplasm. It carries out the reaction a 2'-deoxyribonucleoside 5'-diphosphate + ATP = a 2'-deoxyribonucleoside 5'-triphosphate + ADP. The catalysed reaction is a ribonucleoside 5'-diphosphate + ATP = a ribonucleoside 5'-triphosphate + ADP. Its function is as follows. Major role in the synthesis of nucleoside triphosphates other than ATP. The ATP gamma phosphate is transferred to the NDP beta phosphate via a ping-pong mechanism, using a phosphorylated active-site intermediate. This is Nucleoside diphosphate kinase from Pseudomonas fluorescens (strain ATCC BAA-477 / NRRL B-23932 / Pf-5).